The following is a 481-amino-acid chain: 3-isopropylmalate dehydratase large subunit (481 aa).

[4Fe-4S] cluster-binding residues include C357, C417, and C420.

This sequence belongs to the aconitase/IPM isomerase family. LeuC type 1 subfamily. As to quaternary structure, heterodimer of LeuC and LeuD. [4Fe-4S] cluster is required as a cofactor.

The enzyme catalyses (2R,3S)-3-isopropylmalate = (2S)-2-isopropylmalate. Its pathway is amino-acid biosynthesis; L-leucine biosynthesis; L-leucine from 3-methyl-2-oxobutanoate: step 2/4. Its function is as follows. Catalyzes the isomerization between 2-isopropylmalate and 3-isopropylmalate, via the formation of 2-isopropylmaleate. This is 3-isopropylmalate dehydratase large subunit from Mycolicibacterium gilvum (strain PYR-GCK) (Mycobacterium gilvum (strain PYR-GCK)).